Here is a 542-residue protein sequence, read N- to C-terminus: Apolipoprotein N-acyltransferase (542 aa).

The next 6 membrane-spanning stretches (helical) occupy residues 26 to 46 (ASVI…LSLV), 54 to 74 (IWCL…SWML), 89 to 109 (LLIS…VLCF), 113 to 133 (YWGA…VRYY), 163 to 183 (WAGQ…VLVF), and 187 to 207 (FSYG…GTYY). Residues 220-499 (LRVAIVQPGY…PDVLQVSVPV (280 aa)) enclose the CN hydrolase domain. The active-site Proton acceptor is the Glu264. The active site involves Lys349. The active-site Nucleophile is the Cys404. A helical membrane pass occupies residues 509 to 529 (FGDAPLLFVAVSSVLGVVGYF).

Belongs to the CN hydrolase family. Apolipoprotein N-acyltransferase subfamily.

Its subcellular location is the cell inner membrane. The enzyme catalyses N-terminal S-1,2-diacyl-sn-glyceryl-L-cysteinyl-[lipoprotein] + a glycerophospholipid = N-acyl-S-1,2-diacyl-sn-glyceryl-L-cysteinyl-[lipoprotein] + a 2-acyl-sn-glycero-3-phospholipid + H(+). It functions in the pathway protein modification; lipoprotein biosynthesis (N-acyl transfer). Its function is as follows. Catalyzes the phospholipid dependent N-acylation of the N-terminal cysteine of apolipoprotein, the last step in lipoprotein maturation. The polypeptide is Apolipoprotein N-acyltransferase (Chlamydia muridarum (strain MoPn / Nigg)).